A 310-amino-acid chain; its full sequence is p-hydroxybenzoic acid efflux pump subunit AaeA (310 aa).

Residues 12 to 32 (AITVVLVILAFIAIFNAWVYY) form a helical membrane-spanning segment.

The protein belongs to the membrane fusion protein (MFP) (TC 8.A.1) family.

It is found in the cell inner membrane. In terms of biological role, forms an efflux pump with AaeB. In Escherichia coli O7:K1 (strain IAI39 / ExPEC), this protein is p-hydroxybenzoic acid efflux pump subunit AaeA.